The primary structure comprises 161 residues: M-phase phosphoprotein 6 (161 aa).

Residues K37 and K86 each participate in a glycyl lysine isopeptide (Lys-Gly) (interchain with G-Cter in SUMO2) cross-link. The residue at position 111 (S111) is a Phosphoserine. The short motif at 117–134 (RRYETLVGTIGKKFVKKR) is the Nuclear localization signal element. Glycyl lysine isopeptide (Lys-Gly) (interchain with G-Cter in SUMO2) cross-links involve residues K128, K151, and K154.

This sequence belongs to the MPP6 family. As to quaternary structure, associates with the RNA exosome complex, mediated by EXOSC3. Interacts with ARHGAP18. Interacts with exosome cofactors EXOSC10 and MTREX. Post-translationally, phosphorylated in M (mitotic) phase.

It is found in the nucleus. It localises to the nucleolus. The protein localises to the cytoplasm. RNA-binding protein that associates with the RNA exosome complex. Involved in the 3'-processing of the 7S pre-RNA to the mature 5.8S rRNA and plays a role in recruiting the RNA exosome complex to pre-rRNA; this function may include C1D. The chain is M-phase phosphoprotein 6 from Mus musculus (Mouse).